The primary structure comprises 175 residues: FMRFamide-like neuropeptides 1 (175 aa).

The signal sequence occupies residues Met1–Ala21. Positions Glu22 to Lys68 are excised as a propeptide. Tyr76 is modified (tyrosine amide). Residues Ser79–Gly86 constitute a propeptide that is removed on maturation. A phenylalanine amide mark is found at Phe98, Phe108, Phe120, Phe130, Phe142, and Phe154. Residues Ser157–Ser165 constitute a propeptide that is removed on maturation. The residue at position 173 (Phe173) is a Phenylalanine amide.

Belongs to the FARP (FMRFamide related peptide) family. May be processed by convertase egl-3. In terms of tissue distribution, each flp gene is expressed in a distinct set of neurons. Flp-1 is expressed in the AVA interneurons, the M5 cholinergic pharyngeal motoneurons, and the AIA, AIY, AVE, AVK, RIG and RMG neurons.

The protein localises to the secreted. Together with flp-18, plays a homeostatic role by acting on the GABAergic neural transmission at neuromuscular junctions to prevent overexcitation of the locomotor circuit. In terms of biological role, inhibits the activity of dissected pharyngeal myogenic muscle system. Functionally, DPNFLRF-amide: Inhibits the activity of dissected pharyngeal myogenic muscle system. Its function is as follows. Acts as a ligand for the npr-22 receptor in vitro. The polypeptide is FMRFamide-like neuropeptides 1 (flp-1) (Caenorhabditis elegans).